Here is a 436-residue protein sequence, read N- to C-terminus: Phosphatidylinositol transfer protein CSR1 (436 aa).

The disordered stretch occupies residues 85-104 (VYDAEKVEDSDAEKEKPTPQ). Over residues 86-102 (YDAEKVEDSDAEKEKPT) the composition is skewed to basic and acidic residues. The region spanning 188–347 (KKGIVKQLEL…ELGGKDEYNF (160 aa)) is the CRAL-TRIO domain.

Belongs to the PITP family. In terms of assembly, binds phosphatidylinositol (PtdIns).

It is found in the cytoplasm. The protein resides in the endosome. In terms of biological role, non-classical phosphatidylinositol (PtdIns) transfer protein (PITP), which exhibits PtdIns-binding/transfer activity in the absence of detectable PtdCho-binding/transfer activity. May also regulate post-Golgi membrane-trafficking events and have a role resistance to oxidative stress. The protein is Phosphatidylinositol transfer protein CSR1 (CSR1) of Eremothecium gossypii (strain ATCC 10895 / CBS 109.51 / FGSC 9923 / NRRL Y-1056) (Yeast).